The primary structure comprises 179 residues: Large ribosomal subunit protein uL6 (179 aa).

This sequence belongs to the universal ribosomal protein uL6 family. In terms of assembly, part of the 50S ribosomal subunit.

Its function is as follows. This protein binds to the 23S rRNA, and is important in its secondary structure. It is located near the subunit interface in the base of the L7/L12 stalk, and near the tRNA binding site of the peptidyltransferase center. The chain is Large ribosomal subunit protein uL6 from Acidothermus cellulolyticus (strain ATCC 43068 / DSM 8971 / 11B).